Here is a 276-residue protein sequence, read N- to C-terminus: MTIFVISDSAGETASKLAAASMAQYPTVDFTLIRRTFVKDEDKLVQALEDAKKAEAMVLHTIINDHLVAIANQFFNEHQLFHFDILTPPVAEIERLTGVAPMREPGALHHLNENYFKRIEAMEFAVKYDDGKDPRGFLEADVLLLGVSRTSKTPLSLFLANKNLKVANLPLIPEAHLPKQLFEMDPKKIVGLTNDPNVLNGIRKERMRAYGLPENTSYSDIEKIRRELAFANDLYQKLGCIVIDVASLSIEETASMILNALNLEDHSYYSTETSED.

146-153 (GVSRTSKT) is an ADP binding site.

This sequence belongs to the pyruvate, phosphate/water dikinase regulatory protein family. PDRP subfamily.

The enzyme catalyses N(tele)-phospho-L-histidyl/L-threonyl-[pyruvate, phosphate dikinase] + ADP = N(tele)-phospho-L-histidyl/O-phospho-L-threonyl-[pyruvate, phosphate dikinase] + AMP + H(+). The catalysed reaction is N(tele)-phospho-L-histidyl/O-phospho-L-threonyl-[pyruvate, phosphate dikinase] + phosphate + H(+) = N(tele)-phospho-L-histidyl/L-threonyl-[pyruvate, phosphate dikinase] + diphosphate. In terms of biological role, bifunctional serine/threonine kinase and phosphorylase involved in the regulation of the pyruvate, phosphate dikinase (PPDK) by catalyzing its phosphorylation/dephosphorylation. The chain is Putative pyruvate, phosphate dikinase regulatory protein 2 from Enterococcus faecalis (strain ATCC 700802 / V583).